A 1018-amino-acid chain; its full sequence is MKMWLLVSHLVIISITTCLAEFTWYRRYGHGVSEEDKGFGPIFEEQPINTIYPEESLEGKVSLNCRARASPFPVYKWRMNNGDVDLTSDRYSMVGGNLVINNPDKQKDAGIYYCLASNNYGMVRSTEATLSFGYLDPFPPEERPEVRVKEGKGMVLLCDPPYHFPDDLSYRWLLNEFPVFITMDKRRFVSQTNGNLYIANVEASDKGNYSCFVSSPSITKSVFSKFIPLIPIPERTTKPYPADIVVQFKDVYALMGQNVTLECFALGNPVPDIRWRKVLEPMPSTAEISTSGAVLKIFNIQLEDEGIYECEAENIRGKDKHQARIYVQAFPEWVEHINDTEVDIGSDLYWPCVATGKPIPTIRWLKNGYAYHKGELRLYDVTFENAGMYQCIAENTYGAIYANAELKILALAPTFEMNPMKKKILAAKGGRVIIECKPKAAPKPKFSWSKGTEWLVNSSRILIWEDGSLEINNITRNDGGIYTCFAENNRGKANSTGTLVITDPTRIILAPINADITVGENATMQCAASFDPALDLTFVWSFNGYVIDFNKENIHYQRNFMLDSNGELLIRNAQLKHAGRYTCTAQTIVDNSSASADLVVRGPPGPPGGLRIEDIRATSVALTWSRGSDNHSPISKYTIQTKTILSDDWKDAKTDPPIIEGNMEAARAVDLIPWMEYEFRVVATNTLGRGEPSIPSNRIKTDGAAPNVAPSDVGGGGGRNRELTITWAPLSREYHYGNNFGYIVAFKPFDGEEWKKVTVTNPDTGRYVHKDETMSPSTAFQVKVKAFNNKGDGPYSLVAVINSAQDAPSEAPTEVGVKVLSSSEISVHWEHVLEKIVESYQIRYWAAHDKEEAANRVQVTSQEYSARLENLLPDTQYFIEVGACNSAGCGPPSDMIEAFTKKAPPSQPPRIISSVRSGSRYIITWDHVVALSNESTVTGYKVLYRPDGQHDGKLYSTHKHSIEVPIPRDGEYVVEVRAHSDGGDGVVSQVKISGAPTLSPSLLGLLLPAFGILVYLEF.

The N-terminal stretch at 1–20 is a signal peptide; that stretch reads MKMWLLVSHLVIISITTCLA. 6 consecutive Ig-like C2-type domains span residues 41 to 131, 137 to 223, 241 to 326, 331 to 407, 413 to 500, and 504 to 601; these read PIFE…ATLS, PFPP…KSVF, PADI…ARIY, PEWV…AELK, PTFE…GTLV, and PTRI…LVVR. 2 cysteine pairs are disulfide-bonded: C65–C114 and C158–C211. N208 and N258 each carry an N-linked (GlcNAc...) asparagine glycan. A disulfide bond links C263 and C310. N338 is a glycosylation site (N-linked (GlcNAc...) asparagine). 2 disulfides stabilise this stretch: C352-C391 and C436-C484. N-linked (GlcNAc...) asparagine glycosylation is found at N457 and N473. Residue N494 is glycosylated (N-linked (GlcNAc...) (complex) asparagine). N521 carries an N-linked (GlcNAc...) asparagine glycan. C526 and C583 are disulfide-bonded. N-linked (GlcNAc...) asparagine glycosylation is present at N591. Fibronectin type-III domains follow at residues 606 to 704, 709 to 806, 811 to 906, and 907 to 1000; these read PPGG…TDGA, APSD…SAQD, APTE…APPS, and QPPR…TLSP. Residues 693–717 are disordered; sequence SIPSNRIKTDGAAPNVAPSDVGGGG. N-linked (GlcNAc...) asparagine glycosylation occurs at N933. S993 is lipidated: GPI-anchor amidated serine. Positions 994–1018 are cleaved as a propeptide — removed in mature form; the sequence is GAPTLSPSLLGLLLPAFGILVYLEF.

The protein belongs to the immunoglobulin superfamily. Contactin family. As to quaternary structure, monomer. Interacts with CNTNAP1 in cis form. Binds to the carbonic-anhydrase like domain of PTPRZ1. Interacts with NOTCH1 and TNR. Detected in a complex with NRCAM and PTPRB. Interacts with TASOR. In terms of tissue distribution, strongly expressed in brain and in neuroblastoma and retinoblastoma cell lines. Lower levels of expression in lung, pancreas, kidney and skeletal muscle.

It localises to the cell membrane. In terms of biological role, contactins mediate cell surface interactions during nervous system development. Involved in the formation of paranodal axo-glial junctions in myelinated peripheral nerves and in the signaling between axons and myelinating glial cells via its association with CNTNAP1. Participates in oligodendrocytes generation by acting as a ligand of NOTCH1. Its association with NOTCH1 promotes NOTCH1 activation through the released notch intracellular domain (NICD) and subsequent translocation to the nucleus. Interaction with TNR induces a repulsion of neurons and an inhibition of neurite outgrowth. The protein is Contactin-1 (CNTN1) of Homo sapiens (Human).